The sequence spans 490 residues: Aspartyl/glutamyl-tRNA(Asn/Gln) amidotransferase subunit B (490 aa).

This sequence belongs to the GatB/GatE family. GatB subfamily. Heterotrimer of A, B and C subunits.

The enzyme catalyses L-glutamyl-tRNA(Gln) + L-glutamine + ATP + H2O = L-glutaminyl-tRNA(Gln) + L-glutamate + ADP + phosphate + H(+). The catalysed reaction is L-aspartyl-tRNA(Asn) + L-glutamine + ATP + H2O = L-asparaginyl-tRNA(Asn) + L-glutamate + ADP + phosphate + 2 H(+). Its function is as follows. Allows the formation of correctly charged Asn-tRNA(Asn) or Gln-tRNA(Gln) through the transamidation of misacylated Asp-tRNA(Asn) or Glu-tRNA(Gln) in organisms which lack either or both of asparaginyl-tRNA or glutaminyl-tRNA synthetases. The reaction takes place in the presence of glutamine and ATP through an activated phospho-Asp-tRNA(Asn) or phospho-Glu-tRNA(Gln). The chain is Aspartyl/glutamyl-tRNA(Asn/Gln) amidotransferase subunit B from Synechococcus sp. (strain JA-2-3B'a(2-13)) (Cyanobacteria bacterium Yellowstone B-Prime).